The following is a 343-amino-acid chain: tRNA N6-adenosine threonylcarbamoyltransferase (343 aa).

Fe cation is bound by residues His-116 and His-120. Substrate contacts are provided by residues 138–142 (LVSGG), Asp-171, Gly-184, Asp-188, and Asn-277. Residue Asp-306 coordinates Fe cation.

This sequence belongs to the KAE1 / TsaD family. Fe(2+) serves as cofactor.

It is found in the cytoplasm. The catalysed reaction is L-threonylcarbamoyladenylate + adenosine(37) in tRNA = N(6)-L-threonylcarbamoyladenosine(37) in tRNA + AMP + H(+). Its function is as follows. Required for the formation of a threonylcarbamoyl group on adenosine at position 37 (t(6)A37) in tRNAs that read codons beginning with adenine. Is involved in the transfer of the threonylcarbamoyl moiety of threonylcarbamoyl-AMP (TC-AMP) to the N6 group of A37, together with TsaE and TsaB. TsaD likely plays a direct catalytic role in this reaction. This chain is tRNA N6-adenosine threonylcarbamoyltransferase, found in Ligilactobacillus salivarius (strain UCC118) (Lactobacillus salivarius).